Here is a 200-residue protein sequence, read N- to C-terminus: MAKVLVLYYSSYGHVETMAQQVAEGAKSVPGVEVTLKRVPETIPADQAKAIGIKTDQAAPVATVDELADYDAILFGTPTRFGNMAGQMRTFLDQTGGLWMKGALVGKIGSVFASTGTQHGGQETTITSFHTTLLHHGMVIVGVPYACSGLVNMNEITGGTPYGATTLAGADGSRQPSANELDIARYQGKHVAELAVKLAS.

In terms of domain architecture, Flavodoxin-like spans 4-191; it reads VLVLYYSSYG…DIARYQGKHV (188 aa). FMN contacts are provided by residues 10 to 15 and 79 to 81; these read SSYGHV and TRF. Residue Tyr-12 coordinates NAD(+). A substrate-binding site is contributed by Trp-99. Residues 114-120 and His-135 contribute to the FMN site; that span reads STGTQHG.

Belongs to the WrbA family. FMN serves as cofactor.

The catalysed reaction is a quinone + NADH + H(+) = a quinol + NAD(+). It carries out the reaction a quinone + NADPH + H(+) = a quinol + NADP(+). The chain is NAD(P)H dehydrogenase (quinone) from Burkholderia multivorans (strain ATCC 17616 / 249).